The primary structure comprises 483 residues: Glutamyl-tRNA(Gln) amidotransferase subunit A (483 aa).

Catalysis depends on charge relay system residues Lys77 and Ser152. Ser176 acts as the Acyl-ester intermediate in catalysis.

Belongs to the amidase family. GatA subfamily. Heterotrimer of A, B and C subunits.

The enzyme catalyses L-glutamyl-tRNA(Gln) + L-glutamine + ATP + H2O = L-glutaminyl-tRNA(Gln) + L-glutamate + ADP + phosphate + H(+). Its function is as follows. Allows the formation of correctly charged Gln-tRNA(Gln) through the transamidation of misacylated Glu-tRNA(Gln) in organisms which lack glutaminyl-tRNA synthetase. The reaction takes place in the presence of glutamine and ATP through an activated gamma-phospho-Glu-tRNA(Gln). This is Glutamyl-tRNA(Gln) amidotransferase subunit A from Listeria welshimeri serovar 6b (strain ATCC 35897 / DSM 20650 / CCUG 15529 / CIP 8149 / NCTC 11857 / SLCC 5334 / V8).